A 565-amino-acid polypeptide reads, in one-letter code: Liver carboxylesterase 1 (565 aa).

The signal sequence occupies residues 1-18; the sequence is MWLCALALASLAACTAWG. Asn-79 is a glycosylation site (N-linked (GlcNAc...) asparagine). An intrachain disulfide couples Cys-87 to Cys-116. The active-site Acyl-ester intermediate is Ser-221. An intrachain disulfide couples Cys-273 to Cys-284. The active-site Charge relay system is the Glu-353. Asn-389 carries N-linked (GlcNAc...) asparagine glycosylation. His-467 (charge relay system) is an active-site residue. A short sequence motif (prevents secretion from ER) is located at residue Leu-565.

This sequence belongs to the type-B carboxylesterase/lipase family. Monomer.

The protein localises to the endoplasmic reticulum lumen. The catalysed reaction is a carboxylic ester + H2O = an alcohol + a carboxylate + H(+). Functionally, involved in the detoxification of xenobiotics and in the activation of ester and amide prodrugs. This Oryctolagus cuniculus (Rabbit) protein is Liver carboxylesterase 1.